A 435-amino-acid chain; its full sequence is Glutamate-1-semialdehyde 2,1-aminomutase (435 aa).

Lys269 is subject to N6-(pyridoxal phosphate)lysine.

Belongs to the class-III pyridoxal-phosphate-dependent aminotransferase family. HemL subfamily. As to quaternary structure, homodimer. Requires pyridoxal 5'-phosphate as cofactor.

The protein resides in the cytoplasm. It catalyses the reaction (S)-4-amino-5-oxopentanoate = 5-aminolevulinate. It participates in porphyrin-containing compound metabolism; protoporphyrin-IX biosynthesis; 5-aminolevulinate from L-glutamyl-tRNA(Glu): step 2/2. This is Glutamate-1-semialdehyde 2,1-aminomutase from Gemmatimonas aurantiaca (strain DSM 14586 / JCM 11422 / NBRC 100505 / T-27).